The primary structure comprises 148 residues: Ribonuclease H (148 aa).

An RNase H type-1 domain is found at 3–144 (DKEQVVIYTD…ADQLANRGVA (142 aa)). Mg(2+) contacts are provided by D12, E50, D72, and D136. Residues 125–148 (GHTGDPGNERADQLANRGVAELPR) are disordered.

Belongs to the RNase H family. In terms of assembly, monomer. Requires Mg(2+) as cofactor.

The protein localises to the cytoplasm. It catalyses the reaction Endonucleolytic cleavage to 5'-phosphomonoester.. Its function is as follows. Endonuclease that specifically degrades the RNA of RNA-DNA hybrids. The sequence is that of Ribonuclease H from Pseudomonas aeruginosa (strain LESB58).